Consider the following 236-residue polypeptide: Small ribosomal subunit protein uS5 (236 aa).

The region spanning Glu61–Ile124 is the S5 DRBM domain.

It belongs to the universal ribosomal protein uS5 family. As to quaternary structure, part of the 30S ribosomal subunit. Contacts protein S4.

Its function is as follows. With S4 and S12 plays an important role in translational accuracy. The sequence is that of Small ribosomal subunit protein uS5 from Pyrococcus horikoshii (strain ATCC 700860 / DSM 12428 / JCM 9974 / NBRC 100139 / OT-3).